A 256-amino-acid chain; its full sequence is Ribosomal RNA small subunit methyltransferase A (256 aa).

Asn12, Leu14, Gly39, Glu60, Asp85, and Asn103 together coordinate S-adenosyl-L-methionine.

The protein belongs to the class I-like SAM-binding methyltransferase superfamily. rRNA adenine N(6)-methyltransferase family. RsmA subfamily.

The protein resides in the cytoplasm. It catalyses the reaction adenosine(1518)/adenosine(1519) in 16S rRNA + 4 S-adenosyl-L-methionine = N(6)-dimethyladenosine(1518)/N(6)-dimethyladenosine(1519) in 16S rRNA + 4 S-adenosyl-L-homocysteine + 4 H(+). Functionally, specifically dimethylates two adjacent adenosines (A1518 and A1519) in the loop of a conserved hairpin near the 3'-end of 16S rRNA in the 30S particle. May play a critical role in biogenesis of 30S subunits. In Legionella pneumophila subsp. pneumophila (strain Philadelphia 1 / ATCC 33152 / DSM 7513), this protein is Ribosomal RNA small subunit methyltransferase A.